The following is a 673-amino-acid chain: Paralemmin-3 (673 aa).

Coiled coils occupy residues 4–49 and 75–101; these read SSLY…LRER and GQAQARIRNLEDSLFTLQSQLQLLQSA. Disordered regions lie at residues 49–78 and 99–213; these read RWLMDGAAAVPEPSEDPTSKDPQSPEGQAQ and QSAS…GEAK. The segment covering 123-137 has biased composition (polar residues); the sequence is LSQSIVEAGSVGQTD. Ser124 and Ser143 each carry phosphoserine. Thr151 is modified (phosphothreonine). Ser155, Ser157, and Ser260 each carry phosphoserine. Disordered stretches follow at residues 295–343 and 356–673; these read VPEV…SFIW and LLVE…CAVM. A Phosphothreonine modification is found at Thr301. The residue at position 325 (Ser325) is a Phosphoserine. The segment covering 327–338 has biased composition (gly residues); that stretch reads EGDGQGGSGGEE. Phosphoserine is present on residues Ser375 and Ser420. Basic and acidic residues-rich tracts occupy residues 392–477 and 487–532; these read EAEK…KRGA and GVEK…EKTQ. 2 positions are modified to phosphoserine: Ser544 and Ser660. S-palmitoyl cysteine attachment occurs at residues Cys667 and Cys669. A Cysteine methyl ester modification is found at Cys670. Cys670 is lipidated: S-farnesyl cysteine. Positions 671 to 673 are cleaved as a propeptide — removed in mature form; that stretch reads AVM.

This sequence belongs to the paralemmin family. Interacts with SIGIRR. In terms of processing, palmitoylated on Cys-667 and Cys-669 and prenylated on Cys-670; which is required for membrane association.

It localises to the cytoplasm. The protein localises to the cell membrane. In terms of biological role, ATP-binding protein, which may act as a adapter in the Toll-like receptor (TLR) signaling. This chain is Paralemmin-3 (PALM3), found in Homo sapiens (Human).